A 396-amino-acid chain; its full sequence is tRNA-specific 2-thiouridylase MnmA (396 aa).

ATP is bound by residues 42 to 49 and M68; that span reads GMSGGVDS. The interval 128 to 130 is interaction with target base in tRNA; it reads NPD. C133 (nucleophile) is an active-site residue. Cysteines 133 and 230 form a disulfide. G158 provides a ligand contact to ATP. An interaction with tRNA region spans residues 180–182; that stretch reads KDQ. The active-site Cysteine persulfide intermediate is the C230. The interaction with tRNA stretch occupies residues 342–343; that stretch reads RY.

The protein belongs to the MnmA/TRMU family.

It localises to the cytoplasm. It carries out the reaction S-sulfanyl-L-cysteinyl-[protein] + uridine(34) in tRNA + AH2 + ATP = 2-thiouridine(34) in tRNA + L-cysteinyl-[protein] + A + AMP + diphosphate + H(+). Functionally, catalyzes the 2-thiolation of uridine at the wobble position (U34) of tRNA, leading to the formation of s(2)U34. In Pseudoalteromonas atlantica (strain T6c / ATCC BAA-1087), this protein is tRNA-specific 2-thiouridylase MnmA.